Consider the following 804-residue polypeptide: Elongation factor G, mitochondrial (804 aa).

Residues 1–9 (MVRPAQVRA) constitute a mitochondrion transit peptide. In terms of domain architecture, tr-type G spans 103 to 389 (SKVRNIGIAA…GVCDYLPNPS (287 aa)). GTP contacts are provided by residues 112 to 119 (AHIDSGKT), 187 to 191 (DTPGH), and 241 to 244 (NKMD).

It belongs to the TRAFAC class translation factor GTPase superfamily. Classic translation factor GTPase family. EF-G/EF-2 subfamily.

The protein localises to the mitochondrion. It functions in the pathway protein biosynthesis; polypeptide chain elongation. Functionally, mitochondrial GTPase that catalyzes the GTP-dependent ribosomal translocation step during translation elongation. During this step, the ribosome changes from the pre-translocational (PRE) to the post-translocational (POST) state as the newly formed A-site-bound peptidyl-tRNA and P-site-bound deacylated tRNA move to the P and E sites, respectively. Catalyzes the coordinated movement of the two tRNA molecules, the mRNA and conformational changes in the ribosome. This is Elongation factor G, mitochondrial (mef1) from Talaromyces stipitatus (strain ATCC 10500 / CBS 375.48 / QM 6759 / NRRL 1006) (Penicillium stipitatum).